The chain runs to 160 residues: 3-hydroxyacyl-[acyl-carrier-protein] dehydratase FabZ (160 aa).

H63 is a catalytic residue.

It belongs to the thioester dehydratase family. FabZ subfamily.

The protein localises to the cytoplasm. The catalysed reaction is a (3R)-hydroxyacyl-[ACP] = a (2E)-enoyl-[ACP] + H2O. Functionally, involved in unsaturated fatty acids biosynthesis. Catalyzes the dehydration of short chain beta-hydroxyacyl-ACPs and long chain saturated and unsaturated beta-hydroxyacyl-ACPs. The chain is 3-hydroxyacyl-[acyl-carrier-protein] dehydratase FabZ from Xylella fastidiosa (strain M23).